Reading from the N-terminus, the 479-residue chain is MAQHAVYFPDAFLTQMREAMPSTLSFDEFISACQRPLRRSIRINTLKISVADFLALIAPYGWSLTPIPWCHEGFWIERDDEEALPLGSTAEHLSGLFYIQEASSMLPVAALFADDNHPQRVMDMAAAPGSKTTQIAARMGNRGTILANEFSASRVKVLHANISRCGIANTALTHFDGRVFGAALPEMFDAILLDAPCSGEGVVRKDPDALKNWSPESNLDIAATQRELLDSAFHALRPGGTLVYSTCTLNRQENEAVCLWLKETYADAVEFLPLGDLFPDADRALTPEGFLHVFPQIYDCEGFFVARLRKMSSLPAMPAPGYKVGAFPFTPLKGREALHVTQAANAVGLLWDENLHLWQREKEVWLFPAEIESLIGKVRFSRLGIKLAESHNKGYRWQHEATIALACPTHAHAFELSVQEAEEWYRGRDIYPQTPPAADDVLVTFQHQPLGLAKRIGARIKNSYPRELVRDGKLFTGNS.

S-adenosyl-L-methionine is bound by residues 125-131 (AAAPGSK), Glu149, Asp176, and Asp194. The active-site Nucleophile is the Cys247.

The protein belongs to the class I-like SAM-binding methyltransferase superfamily. RsmB/NOP family.

The protein resides in the cytoplasm. It catalyses the reaction cytidine(1407) in 16S rRNA + S-adenosyl-L-methionine = 5-methylcytidine(1407) in 16S rRNA + S-adenosyl-L-homocysteine + H(+). In terms of biological role, specifically methylates the cytosine at position 1407 (m5C1407) of 16S rRNA. The polypeptide is Ribosomal RNA small subunit methyltransferase F (Salmonella paratyphi C (strain RKS4594)).